The primary structure comprises 385 residues: 1-deoxy-D-xylulose 5-phosphate reductoisomerase 1 (385 aa).

Thr-11, Gly-12, Ser-13, Ile-14, Asn-39, and Asn-122 together coordinate NADPH. Position 123 (Lys-123) interacts with 1-deoxy-D-xylulose 5-phosphate. Glu-124 is an NADPH binding site. Asp-148 contacts Mn(2+). 4 residues coordinate 1-deoxy-D-xylulose 5-phosphate: Ser-149, Glu-150, Ser-174, and His-197. Mn(2+) is bound at residue Glu-150. Gly-203 contacts NADPH. Positions 210, 215, 216, and 219 each coordinate 1-deoxy-D-xylulose 5-phosphate. Glu-219 provides a ligand contact to Mn(2+).

Belongs to the DXR family. Requires Mg(2+) as cofactor. The cofactor is Mn(2+).

It catalyses the reaction 2-C-methyl-D-erythritol 4-phosphate + NADP(+) = 1-deoxy-D-xylulose 5-phosphate + NADPH + H(+). Its pathway is isoprenoid biosynthesis; isopentenyl diphosphate biosynthesis via DXP pathway; isopentenyl diphosphate from 1-deoxy-D-xylulose 5-phosphate: step 1/6. Its function is as follows. Catalyzes the NADPH-dependent rearrangement and reduction of 1-deoxy-D-xylulose-5-phosphate (DXP) to 2-C-methyl-D-erythritol 4-phosphate (MEP). In Bacillus anthracis, this protein is 1-deoxy-D-xylulose 5-phosphate reductoisomerase 1.